We begin with the raw amino-acid sequence, 72 residues long: Large ribosomal subunit protein bL31 (72 aa).

Cys16, Cys18, Cys36, and Cys39 together coordinate Zn(2+).

The protein belongs to the bacterial ribosomal protein bL31 family. Type A subfamily. In terms of assembly, part of the 50S ribosomal subunit. Requires Zn(2+) as cofactor.

Functionally, binds the 23S rRNA. The polypeptide is Large ribosomal subunit protein bL31 (Geobacter sp. (strain M21)).